Consider the following 336-residue polypeptide: Aldehyde reductase AdhA (336 aa).

Residues Cys36, Cys39, His61, Cys92, Cys95, Cys98, Cys106, and Cys148 each contribute to the Zn(2+) site.

Belongs to the zinc-containing alcohol dehydrogenase family. Homotetramer. The cofactor is Zn(2+).

The protein resides in the cytoplasm. The catalysed reaction is a primary alcohol + NADP(+) = an aldehyde + NADPH + H(+). Its function is as follows. Active on a wide variety of primary alcohols and their corresponding aldehydes, but not against ketones nor secondary alcohols. Active on aliphatic compounds up to 5 carbons in length and aromatic alcohols, less effective on branched-chain primary alcohols. Prefers NADPH to NADH. Its catalytic efficiency is greatest for aldehydes, suggesting the reduction of aromatic and medium-chain aliphatic aldehydes is its in vivo activity. Plays a role in tolerance to internally produced ethanol. This is Aldehyde reductase AdhA from Synechocystis sp. (strain ATCC 27184 / PCC 6803 / Kazusa).